Consider the following 150-residue polypeptide: Viral late gene transcription factor 2 (150 aa).

This sequence belongs to the orthopoxvirus VLTF-2/OPG126 family. Interacts with the late transcription elongation factor VLTF-4/OPG110. Interacts with the late transcription factors VLTF-1/OPG093.

Acts with RNA polymerase to initiate transcription from late gene promoters. The chain is Viral late gene transcription factor 2 (OPG126) from Monkeypox virus.